The sequence spans 330 residues: Probable allantoicase (330 aa).

Belongs to the allantoicase family.

It catalyses the reaction allantoate + H2O = (S)-ureidoglycolate + urea. Its pathway is nitrogen metabolism; (S)-allantoin degradation; (S)-ureidoglycolate from allantoate (aminidohydrolase route): step 1/1. In Photobacterium profundum (strain SS9), this protein is Probable allantoicase.